The primary structure comprises 207 residues: Small ribosomal subunit protein uS4 (207 aa).

Residues 31 to 56 form a disordered region; it reads KCKLDSKPGQHGRTSGARTSDYGNQL. Over residues 42 to 53 the composition is skewed to polar residues; it reads GRTSGARTSDYG. In terms of domain architecture, S4 RNA-binding spans 97 to 157; the sequence is TRLDNVVYRM…EKSKKQVRIV (61 aa).

This sequence belongs to the universal ribosomal protein uS4 family. As to quaternary structure, part of the 30S ribosomal subunit. Contacts protein S5. The interaction surface between S4 and S5 is involved in control of translational fidelity.

Functionally, one of the primary rRNA binding proteins, it binds directly to 16S rRNA where it nucleates assembly of the body of the 30S subunit. In terms of biological role, with S5 and S12 plays an important role in translational accuracy. In Herminiimonas arsenicoxydans, this protein is Small ribosomal subunit protein uS4.